Here is a 401-residue protein sequence, read N- to C-terminus: Elongation factor Tu 1 (401 aa).

Positions 10 to 209 (KPHVNVGTIG…AVDEYIPTPV (200 aa)) constitute a tr-type G domain. The tract at residues 19 to 26 (GHVDHGKT) is G1. 19 to 26 (GHVDHGKT) is a GTP binding site. T26 contacts Mg(2+). The tract at residues 60–64 (GITIA) is G2. The G3 stretch occupies residues 81–84 (DCPG). GTP-binding positions include 81–85 (DCPGH) and 136–139 (NKVD). Residues 136–139 (NKVD) are G4. The G5 stretch occupies residues 174–176 (SAL).

The protein belongs to the TRAFAC class translation factor GTPase superfamily. Classic translation factor GTPase family. EF-Tu/EF-1A subfamily. In terms of assembly, monomer.

It is found in the cytoplasm. It catalyses the reaction GTP + H2O = GDP + phosphate + H(+). GTP hydrolase that promotes the GTP-dependent binding of aminoacyl-tRNA to the A-site of ribosomes during protein biosynthesis. The protein is Elongation factor Tu 1 of Roseiflexus castenholzii (strain DSM 13941 / HLO8).